The following is a 414-amino-acid chain: MSGAPPSYSFVALPPRAKDGLVVFGKNSARPRDEVQEVVYFPAVDHDAESKVECTYISIDQVPRTHAIVISRPAWLWGAEMGANEHGVCIANEAINAREPAAETEALLGMDLVRLGLERGTTAKEALDIIVSLLDEHGQGGNYYEDAHSCHSFQSAYLLVDRDEAWVLETVGKYWAAERITEGVRCICNHLSLATKLDEEHPELRTYAQSQGWWTGDDEFNFAQVFSPADDRLDCCAGQDSLEKQEESITVQTMINILRDKASGVCIDSESFLTTASIVSVLPQNRSSPCIHYFTGTPDPSRSIFKPFIFVDDVKLVPKAQSPCFGDDDPAKKEPRFQEKPDRRHELYKAHEWARAVIESDEEQGRTLRKTMLELEKQGLEAMDEILSSPEPPDPAEVGDLFYDCVDTEMKFFK.

This sequence belongs to the peptidase C69 family. Secernin subfamily.

Its subcellular location is the cytoplasm. Regulates exocytosis in mast cells. Increases both the extent of secretion and the sensitivity of mast cells to stimulation with calcium. This is Secernin-1 (Scrn1) from Mus musculus (Mouse).